A 473-amino-acid chain; its full sequence is Mannose-1-phosphate guanylyltransferase (473 aa).

Belongs to the mannose-6-phosphate isomerase type 2 family. As to quaternary structure, homodimer.

It catalyses the reaction alpha-D-mannose 1-phosphate + GTP + H(+) = GDP-alpha-D-mannose + diphosphate. The protein operates within nucleotide-sugar biosynthesis; GDP-alpha-D-mannose biosynthesis; GDP-alpha-D-mannose from alpha-D-mannose 1-phosphate (GTP route): step 1/1. Its pathway is bacterial outer membrane biogenesis; LPS O-antigen biosynthesis. Its function is as follows. Involved in GDP-mannose biosynthesis which serves as the activated sugar nucleotide precursor for mannose residues in cell surface polysaccharides. This enzyme participates in synthesis of the LPS group C2 O antigen. This is Mannose-1-phosphate guanylyltransferase (rfbM) from Salmonella muenchen.